A 25-amino-acid chain; its full sequence is RGSNLTIHPLRNIKDLVYLGNMGIG.

A glycan (N-linked (GlcNAc...) asparagine) is linked at N4.

It belongs to the peptidase A1 family. In terms of tissue distribution, highly expressed in the placenta between day 60 and day 100 of gestation.

It localises to the secreted. The protein localises to the extracellular space. The sequence is that of Pregnancy-associated glycoprotein 59g from Ovis aries (Sheep).